A 507-amino-acid polypeptide reads, in one-letter code: ATP synthase subunit alpha, chloroplastic (507 aa).

170-177 contributes to the ATP binding site; sequence GDRQTGKT.

This sequence belongs to the ATPase alpha/beta chains family. As to quaternary structure, F-type ATPases have 2 components, CF(1) - the catalytic core - and CF(0) - the membrane proton channel. CF(1) has five subunits: alpha(3), beta(3), gamma(1), delta(1), epsilon(1). CF(0) has four main subunits: a, b, b' and c.

Its subcellular location is the plastid. It is found in the chloroplast thylakoid membrane. The catalysed reaction is ATP + H2O + 4 H(+)(in) = ADP + phosphate + 5 H(+)(out). Produces ATP from ADP in the presence of a proton gradient across the membrane. The alpha chain is a regulatory subunit. The sequence is that of ATP synthase subunit alpha, chloroplastic from Daucus carota (Wild carrot).